Reading from the N-terminus, the 226-residue chain is Thymidylate kinase (226 aa).

20–27 lines the ATP pocket; the sequence is GGEGAGKS.

It belongs to the thymidylate kinase family.

It carries out the reaction dTMP + ATP = dTDP + ADP. Its function is as follows. Phosphorylation of dTMP to form dTDP in both de novo and salvage pathways of dTTP synthesis. This Bradyrhizobium sp. (strain ORS 278) protein is Thymidylate kinase.